Reading from the N-terminus, the 501-residue chain is MTDPTNAPALDENQIIAERRAKLAAIREAGVAFPNDFERRDYAGRLAHEHGDKSKEALEAEAVDVQLAGRMMLKRVMGKASFATLQDMSGRIQVYVSNDLTGLDAHEAFKRWDLGDFVGVSGTLFKTNKGELTIQAKSVRLLSKALRPLPEKFHGLADQEQKYRQRYLDLITNDDARSTFVRRSKIIQAIREFMTGHGFLEVETPMMHPIPGGAAAKPFVTHHNALDMELFLRIAPELYLKRLVVGGFEKVFEINRNFRNEGLSTRHNPEFTMMEFYEAYREYRYLMDFTEALIRHTAVAATGSTTISYQGSTIELGTPFDRLTIVEAVRKYHPEYTVEQLNDRDWLTAQFTAMKAKYREHDGLGGLQLTFFEETTEALLVQPTFIVDYPAEVSPLARRSDTQPEITERFELFITGREMANGFSELNDAEDQAERFMEQVRAKEAGDEEAMHYDADFIRALEHGLPPTGGCGIGIDRLVMLLTDSPSIRDVILFPQMRREA.

Residues Glu-411 and Glu-418 each contribute to the Mg(2+) site.

Belongs to the class-II aminoacyl-tRNA synthetase family. As to quaternary structure, homodimer. Mg(2+) serves as cofactor.

The protein localises to the cytoplasm. The enzyme catalyses tRNA(Lys) + L-lysine + ATP = L-lysyl-tRNA(Lys) + AMP + diphosphate. The protein is Lysine--tRNA ligase of Thiobacillus denitrificans (strain ATCC 25259 / T1).